Here is a 111-residue protein sequence, read N- to C-terminus: Nucleoid-associated protein Ppha_1174 (111 aa).

The protein belongs to the YbaB/EbfC family. In terms of assembly, homodimer.

Its subcellular location is the cytoplasm. It localises to the nucleoid. Functionally, binds to DNA and alters its conformation. May be involved in regulation of gene expression, nucleoid organization and DNA protection. The polypeptide is Nucleoid-associated protein Ppha_1174 (Pelodictyon phaeoclathratiforme (strain DSM 5477 / BU-1)).